A 325-amino-acid chain; its full sequence is GMP reductase (325 aa).

The active-site Thioimidate intermediate is Cys-174. NADP(+) is bound at residue 203–226; that stretch reads LIADGGIRTHGDIAKSIRFGASMV.

This sequence belongs to the IMPDH/GMPR family. GuaC type 2 subfamily.

The enzyme catalyses IMP + NH4(+) + NADP(+) = GMP + NADPH + 2 H(+). In terms of biological role, catalyzes the irreversible NADPH-dependent deamination of GMP to IMP. It functions in the conversion of nucleobase, nucleoside and nucleotide derivatives of G to A nucleotides, and in maintaining the intracellular balance of A and G nucleotides. In Staphylococcus aureus (strain MRSA252), this protein is GMP reductase.